The primary structure comprises 196 residues: Beta-crystallin A4 (196 aa).

The residue at position 2 (Thr2) is an N-acetylthreonine. Residues 2–11 (TLQCTKSAGH) form an N-terminal arm region. 2 Beta/gamma crystallin 'Greek key' domains span residues 12 to 51 (WRMVVWDEEGFQGRRHEFTAECPSVLELGFETVRSLKVLS) and 52 to 98 (GAWV…RPVA). Residues 99-104 (CANHRD) are connecting peptide. 2 consecutive Beta/gamma crystallin 'Greek key' domains span residues 105–146 (SRLT…HVQS) and 147–195 (GAWV…RRIQ).

This sequence belongs to the beta/gamma-crystallin family. In terms of assembly, homo/heterodimer, or complexes of higher-order. The structure of beta-crystallin oligomers seems to be stabilized through interactions between the N-terminal arms.

Crystallins are the dominant structural components of the vertebrate eye lens. The sequence is that of Beta-crystallin A4 (Cryba4) from Mus musculus (Mouse).